The following is a 441-amino-acid chain: D-inositol 3-phosphate glycosyltransferase (441 aa).

His-38 is a 1D-myo-inositol 3-phosphate binding site. UDP-N-acetyl-alpha-D-glucosamine contacts are provided by residues 44-45 and Gly-52; that span reads QP. 1D-myo-inositol 3-phosphate-binding positions include 49 to 54, Lys-107, Tyr-140, Thr-164, and Arg-184; that span reads DAGGMN. UDP-N-acetyl-alpha-D-glucosamine contacts are provided by Arg-258, Lys-263, and Gln-316. 3 residues coordinate Mg(2+): Phe-325, Gln-326, and Ala-328. UDP-N-acetyl-alpha-D-glucosamine-binding residues include Glu-338 and Glu-346. Residue Thr-352 participates in Mg(2+) binding.

It belongs to the glycosyltransferase group 1 family. MshA subfamily. Homodimer.

The enzyme catalyses 1D-myo-inositol 3-phosphate + UDP-N-acetyl-alpha-D-glucosamine = 1D-myo-inositol 2-acetamido-2-deoxy-alpha-D-glucopyranoside 3-phosphate + UDP + H(+). In terms of biological role, catalyzes the transfer of a N-acetyl-glucosamine moiety to 1D-myo-inositol 3-phosphate to produce 1D-myo-inositol 2-acetamido-2-deoxy-glucopyranoside 3-phosphate in the mycothiol biosynthesis pathway. In Mycolicibacterium paratuberculosis (strain ATCC BAA-968 / K-10) (Mycobacterium paratuberculosis), this protein is D-inositol 3-phosphate glycosyltransferase.